We begin with the raw amino-acid sequence, 284 residues long: L-ribulose-5-phosphate 3-epimerase UlaE (284 aa).

It belongs to the L-ribulose-5-phosphate 3-epimerase family.

It catalyses the reaction L-ribulose 5-phosphate = L-xylulose 5-phosphate. The protein operates within cofactor degradation; L-ascorbate degradation; D-xylulose 5-phosphate from L-ascorbate: step 3/4. Catalyzes the isomerization of L-xylulose-5-phosphate to L-ribulose-5-phosphate. Is involved in the anaerobic L-ascorbate utilization. This Escherichia coli O17:K52:H18 (strain UMN026 / ExPEC) protein is L-ribulose-5-phosphate 3-epimerase UlaE.